Reading from the N-terminus, the 413-residue chain is Peptidase T (413 aa).

H82 provides a ligand contact to Zn(2+). Residue D84 is part of the active site. Zn(2+) is bound at residue D144. The active-site Proton acceptor is E178. Zn(2+) contacts are provided by E179, D201, and H383.

It belongs to the peptidase M20B family. In terms of assembly, homotrimer. Requires Zn(2+) as cofactor.

The protein localises to the cytoplasm. The enzyme catalyses Release of the N-terminal residue from a tripeptide.. Its activity is regulated as follows. Totally inhibited by EDTA, EGTA, and 1,10-phenanthroline. Strongly inhibited by divalent cations such as Cu(2+), Cd(2+), Co(2+) and Mn(2+). Partially inhibited by the reducing agents 2-mercaptoethanol and dithiothreitol. Functionally, cleaves the N-terminal amino acid of tripeptides. Shows broad substrate specificity, exhibiting maximum activity against hydrophobic tripeptides, with the highest activity for Met-Gly-Gly. Therefore this enzyme may play an important role in flavor formation during cheese ripening. Is also able to slowly hydrolyze some hydrophobic dipeptides, but displays no activity against tetrapeptides and the tripeptide Phe-Gly-Gly. The protein is Peptidase T (pepT) of Lactobacillus helveticus (Lactobacillus suntoryeus).